Consider the following 245-residue polypeptide: Carbohydrate deacetylase (245 aa).

H59 and H125 together coordinate Mg(2+).

It belongs to the YdjC deacetylase family. As to quaternary structure, homodimer. Requires Mg(2+) as cofactor.

In terms of biological role, probably catalyzes the deacetylation of acetylated carbohydrates an important step in the degradation of oligosaccharides. This chain is Carbohydrate deacetylase, found in Listeria welshimeri serovar 6b (strain ATCC 35897 / DSM 20650 / CCUG 15529 / CIP 8149 / NCTC 11857 / SLCC 5334 / V8).